The sequence spans 152 residues: SXP/RAL-2 family protein Ani s 5 (152 aa).

An N-terminal signal peptide occupies residues 1-18 (MKTLIVAALFCTIGMALA). Necessary for IgE-binding regions lie at residues 25–42 (PPFL…FFEL), 49–54 (KTDPEI), 58–66 (LDAWVDTLG), and 103–120 (KKAD…SLNG). IgG4-binding regions lie at residues 49–68 (KTDP…LGGD) and 118–137 (LNGI…LPQS). Residues 127-146 (IQAIYKTLPQSVKDELEKGI) are igE-binding and IgG4-binding.

This sequence belongs to the SXP/RAL-2 family. As to quaternary structure, monomer. As to expression, excretory gland, ventriculus, and the luminal epithelium of the intestine of the larvae.

It localises to the secreted. This chain is SXP/RAL-2 family protein Ani s 5, found in Anisakis simplex (Herring worm).